A 63-amino-acid polypeptide reads, in one-letter code: MKHVLNLYLLGVVLTLLSIFVRVMESLEGLLESPSPGTSWTTRSQLANTEPTKGLPDHPSRSM.

Residues 1 to 37 form a required for targeting to lipid droplets region; it reads MKHVLNLYLLGVVLTLLSIFVRVMESLEGLLESPSPG. Residues 7-23 traverse the membrane as a helical segment; sequence LYLLGVVLTLLSIFVRV. Residues 31-63 are disordered; sequence LESPSPGTSWTTRSQLANTEPTKGLPDHPSRSM. The segment covering 35-51 has biased composition (polar residues); that stretch reads SPGTSWTTRSQLANTEP. Ser44 bears the Phosphoserine mark.

As to expression, highly expressed in renal cell carcinoma cells but barely detectable in adjacent normal kidney tissue. Detected in some cervical and endometrial cancers. Expression also detected in fetal kidney with little or no expression observed in normal adult heart, liver, lung, pancreas, prostate or spinal cord (at protein level).

Its subcellular location is the lipid droplet. It localises to the secreted. The protein resides in the membrane. Increases intracellular lipid accumulation. Stimulates expression of cytokines including IL6, MIF and VEGFA. Enhances cell growth and proliferation. This is Hypoxia-inducible lipid droplet-associated protein (HILPDA) from Homo sapiens (Human).